Here is a 300-residue protein sequence, read N- to C-terminus: Glycine--tRNA ligase alpha subunit (300 aa).

It belongs to the class-II aminoacyl-tRNA synthetase family. As to quaternary structure, tetramer of two alpha and two beta subunits.

The protein localises to the cytoplasm. The enzyme catalyses tRNA(Gly) + glycine + ATP = glycyl-tRNA(Gly) + AMP + diphosphate. The polypeptide is Glycine--tRNA ligase alpha subunit (Prochlorococcus marinus (strain MIT 9313)).